Here is a 56-residue protein sequence, read N- to C-terminus: Large ribosomal subunit protein bL33 (56 aa).

The protein belongs to the bacterial ribosomal protein bL33 family.

The polypeptide is Large ribosomal subunit protein bL33 (Ehrlichia canis (strain Jake)).